Consider the following 274-residue polypeptide: Ribosomal RNA small subunit methyltransferase A (274 aa).

S-adenosyl-L-methionine is bound by residues His-15, Leu-17, Gly-42, Glu-64, Asp-89, and Asn-108.

It belongs to the class I-like SAM-binding methyltransferase superfamily. rRNA adenine N(6)-methyltransferase family. RsmA subfamily.

It is found in the cytoplasm. It carries out the reaction adenosine(1518)/adenosine(1519) in 16S rRNA + 4 S-adenosyl-L-methionine = N(6)-dimethyladenosine(1518)/N(6)-dimethyladenosine(1519) in 16S rRNA + 4 S-adenosyl-L-homocysteine + 4 H(+). Functionally, specifically dimethylates two adjacent adenosines (A1518 and A1519) in the loop of a conserved hairpin near the 3'-end of 16S rRNA in the 30S particle. May play a critical role in biogenesis of 30S subunits. The protein is Ribosomal RNA small subunit methyltransferase A of Prochlorococcus marinus (strain MIT 9301).